We begin with the raw amino-acid sequence, 495 residues long: Formin-like protein 17 (495 aa).

Residues 1 to 92 form a disordered region; sequence MDIRELIDIT…HNLKGQGQTR (92 aa). Positions 19 to 29 are enriched in pro residues; it reads GPPPPPPPPLL. Residues 30-39 are compositionally biased toward low complexity; it reads QPHHSALSSS. Positions 86-486 constitute an FH2 domain; it reads KGQGQTRKAN…RAQKEAENEK (401 aa).

Belongs to the formin-like family. Class-II subfamily.

This Arabidopsis thaliana (Mouse-ear cress) protein is Formin-like protein 17 (FH17).